The sequence spans 328 residues: Phosphate acyltransferase (328 aa).

It belongs to the PlsX family. As to quaternary structure, homodimer. Probably interacts with PlsY.

It is found in the cytoplasm. The catalysed reaction is a fatty acyl-[ACP] + phosphate = an acyl phosphate + holo-[ACP]. Its pathway is lipid metabolism; phospholipid metabolism. In terms of biological role, catalyzes the reversible formation of acyl-phosphate (acyl-PO(4)) from acyl-[acyl-carrier-protein] (acyl-ACP). This enzyme utilizes acyl-ACP as fatty acyl donor, but not acyl-CoA. This is Phosphate acyltransferase from Mycoplasmoides gallisepticum (strain R(low / passage 15 / clone 2)) (Mycoplasma gallisepticum).